The following is a 1403-amino-acid chain: DNA-directed RNA polymerase subunit beta' (1403 aa).

4 residues coordinate Zn(2+): Cys-71, Cys-73, Cys-86, and Cys-89. Residues Asp-462, Asp-464, and Asp-466 each contribute to the Mg(2+) site. Zn(2+) contacts are provided by Cys-811, Cys-885, Cys-892, and Cys-895.

This sequence belongs to the RNA polymerase beta' chain family. The RNAP catalytic core consists of 2 alpha, 1 beta, 1 beta' and 1 omega subunit. When a sigma factor is associated with the core the holoenzyme is formed, which can initiate transcription. The cofactor is Mg(2+). Zn(2+) is required as a cofactor.

It catalyses the reaction RNA(n) + a ribonucleoside 5'-triphosphate = RNA(n+1) + diphosphate. DNA-dependent RNA polymerase catalyzes the transcription of DNA into RNA using the four ribonucleoside triphosphates as substrates. The polypeptide is DNA-directed RNA polymerase subunit beta' (Bartonella tribocorum (strain CIP 105476 / IBS 506)).